Reading from the N-terminus, the 115-residue chain is Large ribosomal subunit protein bL19 (115 aa).

The protein belongs to the bacterial ribosomal protein bL19 family.

Functionally, this protein is located at the 30S-50S ribosomal subunit interface and may play a role in the structure and function of the aminoacyl-tRNA binding site. This is Large ribosomal subunit protein bL19 from Streptococcus sanguinis (strain SK36).